The primary structure comprises 778 residues: Probable dipeptidyl peptidase 4 (778 aa).

The first 18 residues, 1–18 (MKTSQFLSLLLLAGIAQA), serve as a signal peptide directing secretion. N-linked (GlcNAc...) asparagine glycosylation is found at Asn-84, Asn-114, and Asn-222. Catalysis depends on charge relay system residues Ser-616, Asp-693, and His-728.

Belongs to the peptidase S9B family.

It is found in the secreted. The enzyme catalyses Release of an N-terminal dipeptide, Xaa-Yaa-|-Zaa-, from a polypeptide, preferentially when Yaa is Pro, provided Zaa is neither Pro nor hydroxyproline.. Functionally, extracellular dipeptidyl-peptidase which removes N-terminal dipeptides sequentially from polypeptides having unsubstituted N-termini provided that the penultimate residue is proline. Contributes to pathogenicity. The sequence is that of Probable dipeptidyl peptidase 4 (DPP4) from Arthroderma benhamiae (strain ATCC MYA-4681 / CBS 112371) (Trichophyton mentagrophytes).